The primary structure comprises 156 residues: Endoribonuclease YbeY (156 aa).

Residues His117, His121, and His127 each contribute to the Zn(2+) site.

It belongs to the endoribonuclease YbeY family. It depends on Zn(2+) as a cofactor.

Its subcellular location is the cytoplasm. Its function is as follows. Single strand-specific metallo-endoribonuclease involved in late-stage 70S ribosome quality control and in maturation of the 3' terminus of the 16S rRNA. The chain is Endoribonuclease YbeY from Shewanella frigidimarina (strain NCIMB 400).